The primary structure comprises 260 residues: 5-oxoprolinase subunit A 2 (260 aa).

The protein belongs to the LamB/PxpA family. As to quaternary structure, forms a complex composed of PxpA, PxpB and PxpC.

It carries out the reaction 5-oxo-L-proline + ATP + 2 H2O = L-glutamate + ADP + phosphate + H(+). Catalyzes the cleavage of 5-oxoproline to form L-glutamate coupled to the hydrolysis of ATP to ADP and inorganic phosphate. The protein is 5-oxoprolinase subunit A 2 of Ralstonia nicotianae (strain ATCC BAA-1114 / GMI1000) (Ralstonia solanacearum).